A 257-amino-acid polypeptide reads, in one-letter code: UPF0246 protein Rpic_2164 (257 aa).

It belongs to the UPF0246 family.

The sequence is that of UPF0246 protein Rpic_2164 from Ralstonia pickettii (strain 12J).